The primary structure comprises 62 residues: Large ribosomal subunit protein bL32 (62 aa).

The span at 1–19 shows a compositional bias: basic residues; the sequence is MPNPKRRHSKARTGNRRAH. The segment at 1–23 is disordered; it reads MPNPKRRHSKARTGNRRAHDHLS.

It belongs to the bacterial ribosomal protein bL32 family.

This Koribacter versatilis (strain Ellin345) protein is Large ribosomal subunit protein bL32.